The following is a 424-amino-acid chain: Histidine--tRNA ligase (424 aa).

This sequence belongs to the class-II aminoacyl-tRNA synthetase family. Homodimer.

It is found in the cytoplasm. The catalysed reaction is tRNA(His) + L-histidine + ATP = L-histidyl-tRNA(His) + AMP + diphosphate + H(+). This is Histidine--tRNA ligase from Pectobacterium carotovorum subsp. carotovorum (strain PC1).